Reading from the N-terminus, the 225-residue chain is Glutathione S-transferase Mu 3 (225 aa).

The GST N-terminal domain occupies 5–92 (SSMVLGYWDI…YIARKHNMCG (88 aa)). Residues 11–12 (YW), 50–54 (WLDVK), and 63–64 (NL) contribute to the glutathione site. Residue lysine 54 forms a Glycyl lysine isopeptide (Lys-Gly) (interchain with G-Cter in SUMO2) linkage. A Glycyl lysine isopeptide (Lys-Gly) (interchain with G-Cter in SUMO2) cross-link involves residue lysine 73. Glutathione is bound at residue 76-77 (QS). Residues 94-212 (TEEEKIRVDI…QSDQFCKMPI (119 aa)) enclose the GST C-terminal domain. Residue tyrosine 120 participates in substrate binding.

The protein belongs to the GST superfamily. Mu family. Homodimer. The N-terminus is blocked. In terms of tissue distribution, testis and brain.

The protein resides in the cytoplasm. It catalyses the reaction RX + glutathione = an S-substituted glutathione + a halide anion + H(+). Functionally, conjugation of reduced glutathione to a wide number of exogenous and endogenous hydrophobic electrophiles. May govern uptake and detoxification of both endogenous compounds and xenobiotics at the testis and brain blood barriers. The protein is Glutathione S-transferase Mu 3 (GSTM3) of Homo sapiens (Human).